Here is a 354-residue protein sequence, read N- to C-terminus: 3-dehydroquinate synthase (354 aa).

NAD(+)-binding positions include D69–K74, G103–D107, T127–S128, K140, and K149. Residues E182, H245, and H262 each contribute to the Zn(2+) site.

It belongs to the sugar phosphate cyclases superfamily. Dehydroquinate synthase family. Requires Co(2+) as cofactor. The cofactor is Zn(2+). NAD(+) is required as a cofactor.

The protein localises to the cytoplasm. The enzyme catalyses 7-phospho-2-dehydro-3-deoxy-D-arabino-heptonate = 3-dehydroquinate + phosphate. It participates in metabolic intermediate biosynthesis; chorismate biosynthesis; chorismate from D-erythrose 4-phosphate and phosphoenolpyruvate: step 2/7. Its function is as follows. Catalyzes the conversion of 3-deoxy-D-arabino-heptulosonate 7-phosphate (DAHP) to dehydroquinate (DHQ). This is 3-dehydroquinate synthase from Colwellia psychrerythraea (strain 34H / ATCC BAA-681) (Vibrio psychroerythus).